Reading from the N-terminus, the 273-residue chain is Dermonecrotic toxin LhSicTox-alphaIA2bii (273 aa).

The active site involves His5. Mg(2+)-binding residues include Glu25 and Asp27. Catalysis depends on His41, which acts as the Nucleophile. 2 disulfide bridges follow: Cys45/Cys51 and Cys47/Cys190. Asp85 contributes to the Mg(2+) binding site.

This sequence belongs to the arthropod phospholipase D family. Class II subfamily. The cofactor is Mg(2+). In terms of tissue distribution, expressed by the venom gland.

The protein resides in the secreted. It carries out the reaction an N-(acyl)-sphingosylphosphocholine = an N-(acyl)-sphingosyl-1,3-cyclic phosphate + choline. The catalysed reaction is an N-(acyl)-sphingosylphosphoethanolamine = an N-(acyl)-sphingosyl-1,3-cyclic phosphate + ethanolamine. It catalyses the reaction a 1-acyl-sn-glycero-3-phosphocholine = a 1-acyl-sn-glycero-2,3-cyclic phosphate + choline. The enzyme catalyses a 1-acyl-sn-glycero-3-phosphoethanolamine = a 1-acyl-sn-glycero-2,3-cyclic phosphate + ethanolamine. Dermonecrotic toxins cleave the phosphodiester linkage between the phosphate and headgroup of certain phospholipids (sphingolipid and lysolipid substrates), forming an alcohol (often choline) and a cyclic phosphate. This toxin acts on sphingomyelin (SM). It may also act on ceramide phosphoethanolamine (CPE), lysophosphatidylcholine (LPC) and lysophosphatidylethanolamine (LPE), but not on lysophosphatidylserine (LPS), and lysophosphatidylglycerol (LPG). It acts by transphosphatidylation, releasing exclusively cyclic phosphate products as second products. Induces dermonecrosis, hemolysis, increased vascular permeability, edema, inflammatory response, and platelet aggregation. The sequence is that of Dermonecrotic toxin LhSicTox-alphaIA2bii from Loxosceles hirsuta (Recluse spider).